Consider the following 348-residue polypeptide: Selenide, water dikinase (348 aa).

Cys-17 is a catalytic residue. Residues Lys-20 and 47–49 (RAD) contribute to the ATP site. A Mg(2+)-binding site is contributed by Asp-50. ATP-binding positions include Asp-67, Asp-90, and 138-140 (GHT). Residue Asp-90 coordinates Mg(2+). Asp-226 contacts Mg(2+).

Belongs to the selenophosphate synthase 1 family. Class I subfamily. Homodimer. Mg(2+) serves as cofactor.

It carries out the reaction hydrogenselenide + ATP + H2O = selenophosphate + AMP + phosphate + 2 H(+). Functionally, synthesizes selenophosphate from selenide and ATP. The protein is Selenide, water dikinase of Pelobacter propionicus (strain DSM 2379 / NBRC 103807 / OttBd1).